A 447-amino-acid chain; its full sequence is GTPase Der (447 aa).

EngA-type G domains lie at 3–167 (PVIA…QLPE) and 180–353 (IRLA…KAAT). GTP contacts are provided by residues 9–16 (GRPNVGKS), 56–60 (DTGGF), 119–122 (NKAE), 186–193 (GRPNVGKS), 233–237 (DTAGL), and 298–301 (NKWD). Positions 353 to 438 (TCKMPTPVLT…PLRIEMKTSR (86 aa)) constitute a KH-like domain.

The protein belongs to the TRAFAC class TrmE-Era-EngA-EngB-Septin-like GTPase superfamily. EngA (Der) GTPase family. Associates with the 50S ribosomal subunit.

Functionally, GTPase that plays an essential role in the late steps of ribosome biogenesis. In Paracidovorax citrulli (strain AAC00-1) (Acidovorax citrulli), this protein is GTPase Der.